Reading from the N-terminus, the 124-residue chain is Small polypeptide ROTUNDIFOLIA LIKE 3 (124 aa).

The tract at residues 1–25 (MEDERWKLSSSKGRSKSGRSCSSSS) is disordered. Residues Asn-35 and Asn-38 are each glycosylated (N-linked (GlcNAc...) asparagine). A helical transmembrane segment spans residues 59-75 (AWSAAGAGGGGASSSSS). Positions 60–95 (WSAAGAGGGGASSSSSSQHQHQQQQQQSNNSQRLSK) are disordered. Over residues 71 to 91 (SSSSSSQHQHQQQQQQSNNSQ) the composition is skewed to low complexity. Asn-88 carries N-linked (GlcNAc...) asparagine glycosylation. A required for DVL/RTFL small polypeptide activity region spans residues 92 to 124 (RLSKKCVEAVKEHRARFYIVRRCVSMLVCWRDY).

Belongs to the DVL/RTFL small polypeptides family.

It is found in the cell membrane. Small polypeptide acting as a regulatory molecule which coordinates cellular responses required for differentiation, growth and development, probably by restricting polar cell proliferation in lateral organs (e.g. leaves and petioles). This Oryza sativa subsp. indica (Rice) protein is Small polypeptide ROTUNDIFOLIA LIKE 3.